A 161-amino-acid polypeptide reads, in one-letter code: Lipoprotein signal peptidase (161 aa).

The next 3 helical transmembrane spans lie at 9 to 29 (WLWL…LVVE), 64 to 84 (WQKY…ANVL), and 96 to 113 (MAYA…IDRA). Catalysis depends on residues Asp120 and Asp138. Residues 133-153 (VFNIADVAIVMGAGLLILETF) traverse the membrane as a helical segment.

Belongs to the peptidase A8 family.

It is found in the cell inner membrane. The enzyme catalyses Release of signal peptides from bacterial membrane prolipoproteins. Hydrolyzes -Xaa-Yaa-Zaa-|-(S,diacylglyceryl)Cys-, in which Xaa is hydrophobic (preferably Leu), and Yaa (Ala or Ser) and Zaa (Gly or Ala) have small, neutral side chains.. The protein operates within protein modification; lipoprotein biosynthesis (signal peptide cleavage). In terms of biological role, this protein specifically catalyzes the removal of signal peptides from prolipoproteins. The sequence is that of Lipoprotein signal peptidase from Haemophilus ducreyi (strain 35000HP / ATCC 700724).